The primary structure comprises 370 residues: Phosphoserine aminotransferase (370 aa).

R38 is an L-glutamate binding site. Residues W101, T143, D166, and Q189 each coordinate pyridoxal 5'-phosphate. Residue K190 is modified to N6-(pyridoxal phosphate)lysine. Residue 243 to 244 (NT) coordinates pyridoxal 5'-phosphate.

This sequence belongs to the class-V pyridoxal-phosphate-dependent aminotransferase family. SerC subfamily. As to quaternary structure, homodimer. Requires pyridoxal 5'-phosphate as cofactor.

Its subcellular location is the cytoplasm. It carries out the reaction O-phospho-L-serine + 2-oxoglutarate = 3-phosphooxypyruvate + L-glutamate. The catalysed reaction is 4-(phosphooxy)-L-threonine + 2-oxoglutarate = (R)-3-hydroxy-2-oxo-4-phosphooxybutanoate + L-glutamate. It participates in amino-acid biosynthesis; L-serine biosynthesis; L-serine from 3-phospho-D-glycerate: step 2/3. The protein operates within cofactor biosynthesis; pyridoxine 5'-phosphate biosynthesis; pyridoxine 5'-phosphate from D-erythrose 4-phosphate: step 3/5. Its function is as follows. Catalyzes the reversible conversion of 3-phosphohydroxypyruvate to phosphoserine and of 3-hydroxy-2-oxo-4-phosphonooxybutanoate to phosphohydroxythreonine. The sequence is that of Phosphoserine aminotransferase from Methanosarcina mazei (strain ATCC BAA-159 / DSM 3647 / Goe1 / Go1 / JCM 11833 / OCM 88) (Methanosarcina frisia).